A 302-amino-acid chain; its full sequence is ATP synthase subunit b 1 (302 aa).

A helical transmembrane segment spans residues 5–22; sequence WFTVIAQGINFLLLLWLL. The segment at 278 to 302 is disordered; sequence GLPENEGTDNPEANPPHAEAKIPHA.

It belongs to the ATPase B chain family. In terms of assembly, F-type ATPases have 2 components, F(1) - the catalytic core - and F(0) - the membrane proton channel. F(1) has five subunits: alpha(3), beta(3), gamma(1), delta(1), epsilon(1). F(0) has three main subunits: a(1), b(2) and c(10-14). The alpha and beta chains form an alternating ring which encloses part of the gamma chain. F(1) is attached to F(0) by a central stalk formed by the gamma and epsilon chains, while a peripheral stalk is formed by the delta and b chains.

It localises to the cell inner membrane. In terms of biological role, f(1)F(0) ATP synthase produces ATP from ADP in the presence of a proton or sodium gradient. F-type ATPases consist of two structural domains, F(1) containing the extramembraneous catalytic core and F(0) containing the membrane proton channel, linked together by a central stalk and a peripheral stalk. During catalysis, ATP synthesis in the catalytic domain of F(1) is coupled via a rotary mechanism of the central stalk subunits to proton translocation. Its function is as follows. Component of the F(0) channel, it forms part of the peripheral stalk, linking F(1) to F(0). This chain is ATP synthase subunit b 1, found in Pseudoalteromonas atlantica (strain T6c / ATCC BAA-1087).